Reading from the N-terminus, the 662-residue chain is UvrABC system protein B (662 aa).

The Helicase ATP-binding domain occupies 31 to 188; sequence DNIEGGEKAQ…NDLVDIQFER (158 aa). 44–51 is an ATP binding site; the sequence is GATGTGKT. The short motif at 97–120 is the Beta-hairpin element; the sequence is YYDYYQPEAYVPSSDTYIEKDSSV. The 167-residue stretch at 435–601 folds into the Helicase C-terminal domain; that stretch reads QIDDLLGEIN…TIKKEIRDLI (167 aa). Residues 626–661 enclose the UVR domain; the sequence is KELVKKLEKQMQEAVEVLDFELAAQIRDMMLEVKAL.

It belongs to the UvrB family. In terms of assembly, forms a heterotetramer with UvrA during the search for lesions. Interacts with UvrC in an incision complex.

Its subcellular location is the cytoplasm. Functionally, the UvrABC repair system catalyzes the recognition and processing of DNA lesions. A damage recognition complex composed of 2 UvrA and 2 UvrB subunits scans DNA for abnormalities. Upon binding of the UvrA(2)B(2) complex to a putative damaged site, the DNA wraps around one UvrB monomer. DNA wrap is dependent on ATP binding by UvrB and probably causes local melting of the DNA helix, facilitating insertion of UvrB beta-hairpin between the DNA strands. Then UvrB probes one DNA strand for the presence of a lesion. If a lesion is found the UvrA subunits dissociate and the UvrB-DNA preincision complex is formed. This complex is subsequently bound by UvrC and the second UvrB is released. If no lesion is found, the DNA wraps around the other UvrB subunit that will check the other stand for damage. The protein is UvrABC system protein B of Streptococcus pneumoniae serotype 19F (strain G54).